Reading from the N-terminus, the 359-residue chain is Hereditary hemochromatosis protein homolog (359 aa).

The N-terminal stretch at 1–24 (MSLSAGLPVRPLLLLLLLLWSVAP) is a signal peptide. The interval 25 to 126 (QALPPRSHSL…KVTKLGVVSE (102 aa)) is alpha-1. Over 25–318 (QALPPRSHSL…WEPLQSQAMI (294 aa)) the chain is Extracellular. N-linked (GlcNAc...) asparagine glycans are attached at residues Asn-114, Asn-142, Asn-166, and Asn-246. The alpha-2 stretch occupies residues 127 to 217 (SHILQVVLGC…ELGRGVLGQQ (91 aa)). Disulfide bonds link Cys-136/Cys-199 and Cys-237/Cys-294. Positions 218–309 (VPTLVKVTRH…GLDQPLTASW (92 aa)) are alpha-3. Positions 219–308 (PTLVKVTRHW…PGLDQPLTAS (90 aa)) constitute an Ig-like C1-type domain. The connecting peptide stretch occupies residues 310-318 (EPLQSQAMI). Residues 319 to 339 (IGIISGVTVCAIFLVGILFLI) form a helical membrane-spanning segment. At 340-359 (LRKRKASGGTMGGYVLTDCE) the chain is on the cytoplasmic side.

Belongs to the MHC class I family. In terms of assembly, binds TFR through the extracellular domain in a pH-dependent manner.

Its subcellular location is the cell membrane. Its function is as follows. Binds to transferrin receptor (TFR) and reduces its affinity for iron-loaded transferrin. The sequence is that of Hereditary hemochromatosis protein homolog (Hfe) from Mus musculus (Mouse).